We begin with the raw amino-acid sequence, 368 residues long: Isocitrate dehydrogenase [NAD] subunit 2, mitochondrial (368 aa).

A mitochondrion-targeting transit peptide spans 1–14 (MFRQSIVKQSCRFL). Substrate-binding residues include R118, R128, R149, and D236. Mg(2+) is bound by residues D236, D262, and D266.

This sequence belongs to the isocitrate and isopropylmalate dehydrogenases family. As to quaternary structure, octamer of two non-identical subunits IDH1 and IDH2. Mg(2+) is required as a cofactor. Requires Mn(2+) as cofactor.

Its subcellular location is the mitochondrion. The enzyme catalyses D-threo-isocitrate + NAD(+) = 2-oxoglutarate + CO2 + NADH. Its function is as follows. Performs an essential role in the oxidative function of the citric acid cycle. This chain is Isocitrate dehydrogenase [NAD] subunit 2, mitochondrial (IDH2), found in Kluyveromyces lactis (strain ATCC 8585 / CBS 2359 / DSM 70799 / NBRC 1267 / NRRL Y-1140 / WM37) (Yeast).